The following is a 404-amino-acid chain: Ribosomal RNA large subunit methyltransferase F (404 aa).

2 stretches are compositionally biased toward basic residues: residues 1–10 (MTKHSQKQNR) and 18–29 (QTRRKKPAGKLK). Disordered stretches follow at residues 1 to 54 (MTKH…HERN), 156 to 177 (GTRQ…QRYK), and 289 to 308 (RAAK…PDAN). Positions 30 to 54 (AKSEAKLDTRGKPETTEKKGLHERN) are enriched in basic and acidic residues. A compositionally biased stretch (polar residues) spans 157-172 (TRQNVPYASKPESSAP).

It belongs to the methyltransferase superfamily. METTL16/RlmF family.

The protein resides in the cytoplasm. The enzyme catalyses adenosine(1618) in 23S rRNA + S-adenosyl-L-methionine = N(6)-methyladenosine(1618) in 23S rRNA + S-adenosyl-L-homocysteine + H(+). In terms of biological role, specifically methylates the adenine in position 1618 of 23S rRNA. This Shewanella sediminis (strain HAW-EB3) protein is Ribosomal RNA large subunit methyltransferase F.